Consider the following 438-residue polypeptide: 3-phosphoshikimate 1-carboxyvinyltransferase (438 aa).

3 residues coordinate 3-phosphoshikimate: Lys26, Ser27, and Arg31. Lys26 contacts phosphoenolpyruvate. Gly99 and Arg127 together coordinate phosphoenolpyruvate. 4 residues coordinate 3-phosphoshikimate: Ser172, Gln174, Asp320, and Lys347. Gln174 contacts phosphoenolpyruvate. The active-site Proton acceptor is the Asp320. 2 residues coordinate phosphoenolpyruvate: Arg351 and Arg392.

The protein belongs to the EPSP synthase family. In terms of assembly, monomer.

The protein resides in the cytoplasm. The catalysed reaction is 3-phosphoshikimate + phosphoenolpyruvate = 5-O-(1-carboxyvinyl)-3-phosphoshikimate + phosphate. Its pathway is metabolic intermediate biosynthesis; chorismate biosynthesis; chorismate from D-erythrose 4-phosphate and phosphoenolpyruvate: step 6/7. In terms of biological role, catalyzes the transfer of the enolpyruvyl moiety of phosphoenolpyruvate (PEP) to the 5-hydroxyl of shikimate-3-phosphate (S3P) to produce enolpyruvyl shikimate-3-phosphate and inorganic phosphate. The chain is 3-phosphoshikimate 1-carboxyvinyltransferase from Xanthomonas campestris pv. campestris (strain 8004).